We begin with the raw amino-acid sequence, 317 residues long: Ribosomal protein L11 methyltransferase (317 aa).

S-adenosyl-L-methionine is bound by residues Thr-158, Gly-179, Asp-201, and Asn-244.

The protein belongs to the methyltransferase superfamily. PrmA family.

It localises to the cytoplasm. It catalyses the reaction L-lysyl-[protein] + 3 S-adenosyl-L-methionine = N(6),N(6),N(6)-trimethyl-L-lysyl-[protein] + 3 S-adenosyl-L-homocysteine + 3 H(+). Methylates ribosomal protein L11. This is Ribosomal protein L11 methyltransferase from Streptococcus equi subsp. zooepidemicus (strain H70).